A 423-amino-acid polypeptide reads, in one-letter code: UDP-N-acetylglucosamine 1-carboxyvinyltransferase 1 (423 aa).

23–24 contacts phosphoenolpyruvate; sequence KN. A UDP-N-acetyl-alpha-D-glucosamine-binding site is contributed by R96. The Proton donor role is filled by C120. C120 is subject to 2-(S-cysteinyl)pyruvic acid O-phosphothioketal. UDP-N-acetyl-alpha-D-glucosamine-binding positions include 125–129, D309, and V331; that span reads RPIDL.

It belongs to the EPSP synthase family. MurA subfamily.

The protein localises to the cytoplasm. It carries out the reaction phosphoenolpyruvate + UDP-N-acetyl-alpha-D-glucosamine = UDP-N-acetyl-3-O-(1-carboxyvinyl)-alpha-D-glucosamine + phosphate. The protein operates within cell wall biogenesis; peptidoglycan biosynthesis. Functionally, cell wall formation. Adds enolpyruvyl to UDP-N-acetylglucosamine. This is UDP-N-acetylglucosamine 1-carboxyvinyltransferase 1 from Streptococcus thermophilus (strain ATCC BAA-250 / LMG 18311).